The following is a 421-amino-acid chain: D-inositol 3-phosphate glycosyltransferase (421 aa).

His13 is a 1D-myo-inositol 3-phosphate binding site. Residues 19 to 20 (QP) and Gly27 contribute to the UDP-N-acetyl-alpha-D-glucosamine site. 1D-myo-inositol 3-phosphate contacts are provided by residues 24 to 29 (DAGGMN), Lys82, Tyr115, Thr139, and Arg159. Residues Arg233, Lys238, and Val294 each contribute to the UDP-N-acetyl-alpha-D-glucosamine site. Mg(2+) contacts are provided by Phe303, Arg304, and Ala306. 2 residues coordinate UDP-N-acetyl-alpha-D-glucosamine: Glu316 and Glu324. Residue Thr330 coordinates Mg(2+).

It belongs to the glycosyltransferase group 1 family. MshA subfamily. Homodimer.

The catalysed reaction is 1D-myo-inositol 3-phosphate + UDP-N-acetyl-alpha-D-glucosamine = 1D-myo-inositol 2-acetamido-2-deoxy-alpha-D-glucopyranoside 3-phosphate + UDP + H(+). Its function is as follows. Catalyzes the transfer of a N-acetyl-glucosamine moiety to 1D-myo-inositol 3-phosphate to produce 1D-myo-inositol 2-acetamido-2-deoxy-glucopyranoside 3-phosphate in the mycothiol biosynthesis pathway. The polypeptide is D-inositol 3-phosphate glycosyltransferase (Arthrobacter sp. (strain FB24)).